A 305-amino-acid chain; its full sequence is Glycine--tRNA ligase alpha subunit (305 aa).

It belongs to the class-II aminoacyl-tRNA synthetase family. As to quaternary structure, tetramer of two alpha and two beta subunits.

The protein resides in the cytoplasm. It carries out the reaction tRNA(Gly) + glycine + ATP = glycyl-tRNA(Gly) + AMP + diphosphate. The sequence is that of Glycine--tRNA ligase alpha subunit from Streptococcus pyogenes serotype M18 (strain MGAS8232).